A 1005-amino-acid polypeptide reads, in one-letter code: Helicase-like transcription factor (1005 aa).

Position 27 is an omega-N-methylarginine (Arg-27). A DNA-binding region spans residues 38 to 287 (EFQDIIPPDD…FSEKDQPENV (250 aa)). Lys-112 participates in a covalent cross-link: Glycyl lysine isopeptide (Lys-Gly) (interchain with G-Cter in SUMO2). Phosphotyrosine; by JAK2 is present on Tyr-195. A Glycyl lysine isopeptide (Lys-Gly) (interchain with G-Cter in SUMO2) cross-link involves residue Lys-211. 294–301 (DDMGLGKT) serves as a coordination point for ATP. Residues 325–361 (KNQVKKECNSSESDKPGRKDTIKKTDGLSKEGSRYSE) are compositionally biased toward basic and acidic residues. The tract at residues 325–385 (KNQVKKECNS…SELSSSQPKR (61 aa)) is disordered. Polar residues predominate over residues 373–382 (YSMSELSSSQ). Phosphoserine is present on residues Ser-395, Ser-396, and Ser-398. Positions 427-603 (GPSKIKEDTA…WSLLSFLKLK (177 aa)) constitute a Helicase ATP-binding domain. A DEGH box motif is present at residues 554–557 (DEGH). The residue at position 733 (Thr-733) is a Phosphothreonine. The RING-type zinc-finger motif lies at 757 to 798 (CAICLDSLTVPVITHCAHVFCKPCICQCIQNEQPHAKCPLCR). 2 required for interaction with the RFBP isoform of ATP11B regions span residues 767–772 (PVITHC) and 791–796 (HAKCPL). A Helicase C-terminal domain is found at 834–999 (ALMHALIDLR…EMKQAKINEI (166 aa)). The interval 922 to 1005 (SRVFLMDPAW…INEIRTLIDL (84 aa)) is interaction with SP1 and SP3.

Belongs to the SNF2/RAD54 helicase family. RAD16 subfamily. As to quaternary structure, interacts with SP1 and SP3 independently of DNA; the interaction with these transcriptional factors may be required for basal transcription of target genes. Interacts (via the RING-finger) with isoform RFBP of ATP11B. Progesterone-dependent isoform 1 interacts with EGR1; the interaction requires prior binding to DNA and represses c-Rel via a DNA looping mechanism. Interacts with GATA4. Interacts with PCNA; the interaction promotes polyubiquitination of PCNA through association with the UBE2B-RAD18 and UBE2V2-UBE2N ubiquitin ligase complexes. Interacts with RAD18, SHPRH, UBE2V2 and UBE2N. Post-translationally, phosphorylated on serine, threonine, and tyrosine residues. Tyr-195 phosphorylation is catalyzed by JAK2 in response to prolactin treatment. It is required for DNA binding. In terms of tissue distribution, isoform 1 is expressed preferentially in bladder, cervix, diaphragm, duodenum, epididymis, heart, kidney, liver, lung, ovary (granulosa cells), prostate, spleen, testis (predominantly in the Sertoli cells of the seminiferous tubules) and vagina. Isoform 2 is expressed preferentially in lactating mammary gland and uterine endometrium.

Its subcellular location is the cytoplasm. It is found in the nucleus. The protein localises to the nucleolus. It localises to the nucleoplasm. The enzyme catalyses S-ubiquitinyl-[E2 ubiquitin-conjugating enzyme]-L-cysteine + [acceptor protein]-L-lysine = [E2 ubiquitin-conjugating enzyme]-L-cysteine + N(6)-ubiquitinyl-[acceptor protein]-L-lysine.. Its pathway is protein modification; protein ubiquitination. Has both helicase and E3 ubiquitin ligase activities. Possesses intrinsic ATP-dependent nucleosome-remodeling activity. This activity may be required for transcriptional activation or repression of specific target promoters. These may include the SERPINE1, to which this protein can bind directly. Mediates repression by c-Rel through a DNA-looping mechanism. Plays a role in error-free postreplication repair (PRR) of damaged DNA and maintains genomic stability through acting as a ubiquitin ligase for 'Lys-63'-linked polyubiquitination of chromatin-bound PCNA. Transcriptional regulator that mediates the ability of prolactin to augment progesterone-dependent transcription of the SCGB1A1/uteroglobin gene through a bipartite progesterone receptor half-site/overlapping Y-box combination (-38/-26) where progesterone activation is attenuated by nuclear factor Y binding. Regulation also involves two GC-rich sequences in the proximal promoter (positions -162/+90) and a RUSH/SMARCA3 site (positions -616/-611) in the 5'-untranslated region. This Oryctolagus cuniculus (Rabbit) protein is Helicase-like transcription factor (HLTF).